The primary structure comprises 1001 residues: Phosphatidylinositol 4,5-bisphosphate 5-phosphatase A (1001 aa).

The span at Met1–Ser12 shows a compositional bias: polar residues. 2 disordered regions span residues Met1 to Val130 and Ser144 to Cys412. The RSXSXX motif 1 signature appears at Arg6 to Lys11. Low complexity predominate over residues Gly13–Leu28. The segment covering Gln29–Gln42 has biased composition (polar residues). Position 56 is an asymmetric dimethylarginine; alternate (Arg56). Residue Arg56 is modified to Omega-N-methylarginine; alternate. Position 65 is an omega-N-methylarginine (Arg65). At Arg76 the chain carries Asymmetric dimethylarginine. Arg83 carries the asymmetric dimethylarginine; alternate modification. Arg83 carries the omega-N-methylarginine; alternate modification. A compositionally biased stretch (polar residues) spans Ser161 to Ser174. Ser171 bears the Phosphoserine mark. Over residues Ala180–Pro196 the composition is skewed to low complexity. Residues Pro197–Val210 are compositionally biased toward pro residues. Residues Ala284 to Glu294 are compositionally biased toward basic and acidic residues. Ser292 and Ser325 each carry phosphoserine. The segment covering Val338–Ser348 has biased composition (pro residues). Positions Pro346–Arg351 match the SH3-binding motif. Composition is skewed to low complexity over residues Pro349–Pro361 and Ser394–Thr411. Positions Arg351–Ser356 match the RSXSXX motif 2 motif. The tract at residues Ile420–Phe723 is catalytic. The segment at Leu724–Ser835 is required for ruffle localization. The disordered stretch occupies residues Pro837–Pro1001. The span at Thr838 to Ser853 shows a compositional bias: low complexity. 2 short sequence motifs (RSXSXX motif) span residues Arg869–Gly874 and Arg880–Gly885. The residue at position 898 (Ser898) is a Phosphoserine. Composition is skewed to low complexity over residues Ser905–Arg917 and Ser925–Pro936. Positions Arg906 to Gln911 match the RSXSXX motif 5 motif. Residues Ser937–Val949 are compositionally biased toward pro residues. Ser985 carries the post-translational modification Phosphoserine.

It belongs to the inositol 1,4,5-trisphosphate 5-phosphatase type II family. Post-translationally, phosphorylated on Ser/Thr residues. Expressed in heart, brain, kidney, stomach, small intestine and lung. Not expressed in spleen, thymus, skeletal muscle, testis and skin.

The protein resides in the cytoplasm. The enzyme catalyses 1D-myo-inositol 1,4,5-trisphosphate + H2O = 1D-myo-inositol 1,4-bisphosphate + phosphate. The catalysed reaction is 1D-myo-inositol 1,3,4,5-tetrakisphosphate + H2O = 1D-myo-inositol 1,3,4-trisphosphate + phosphate. It catalyses the reaction a 1,2-diacyl-sn-glycero-3-phospho-(1D-myo-inositol-4,5-bisphosphate) + H2O = a 1,2-diacyl-sn-glycero-3-phospho-(1D-myo-inositol 4-phosphate) + phosphate. Inositol 5-phosphatase, which converts inositol 1,4,5-trisphosphate to inositol 1,4-bisphosphate. Also converts phosphatidylinositol 4,5-bisphosphate to phosphatidylinositol 4-phosphate and inositol 1,3,4,5-tetrakisphosphate to inositol 1,3,4-trisphosphate in vitro. May be involved in modulation of the function of inositol and phosphatidylinositol polyphosphate-binding proteins that are present at membranes ruffles. In Rattus norvegicus (Rat), this protein is Phosphatidylinositol 4,5-bisphosphate 5-phosphatase A (Inpp5j).